Reading from the N-terminus, the 832-residue chain is Mechanosensitive cation channel TMEM63B (832 aa).

The Extracellular segment spans residues 1–40; that stretch reads MLPFLLATLGTTALNNSNPKDYCYSARIRSTVLQGLPFGG. Residues 41-65 traverse the membrane as a helical segment; that stretch reads VPTVLALDFMCFLALLFLFSILRKV. Residue cysteine 51 is the site of S-palmitoyl cysteine attachment. The Cytoplasmic portion of the chain corresponds to 66–145; it reads AWDYGRLALV…KDDEIRDKCG (80 aa). The short motif at 86-88 is the Mediates endoplasmic reticulum retention element; sequence RDR. Serine 111, serine 113, serine 114, and serine 115 each carry phosphoserine. Cysteine 126 carries S-palmitoyl cysteine lipidation. Residues 146–178 traverse the membrane as a helical segment; that stretch reads GDAVHYLSFQRHIIGLLVVVGVLSVGIVLPVNF. Topologically, residues 179-202 are extracellular; it reads SGDLLENNAYSFGRTTIANLKSGN. The helical transmembrane segment at 203-227 threads the bilayer; sequence NLLWLHTSFAFLYLLLTVYSMRRHT. Residues 228–427 are Cytoplasmic-facing; that stretch reads SKMRYKEDDL…IYWEHLSIRG (200 aa). Residues 231–426 form an intracellular linker IL2; confers mechanosensitivity region; sequence RYKEDDLVKR…NIYWEHLSIR (196 aa). S-palmitoyl cysteine attachment occurs at residues cysteine 382 and cysteine 398. The chain crosses the membrane as a helical span at residues 428–457; the sequence is FIWWLRCLVINVVLFILLFFLTTPAIIITT. At 458–472 the chain is on the extracellular side; sequence MDKFNVTKPVEYLNN. N-linked (GlcNAc...) asparagine glycosylation is present at asparagine 462. The chain crosses the membrane as a helical span at residues 473–502; sequence PIITQFFPTLLLWCFSALLPTIVYYSAFFE. Topologically, residues 503–506 are cytoplasmic; sequence AHWT. Residues 507–543 traverse the membrane as a helical segment; the sequence is RSGENRTTMHKCYTFLIFMVLLLPSLGLSSLDLFFRW. The Extracellular segment spans residues 544–566; sequence LFDKKFLAEAAIRFECVFLPDNG. Residues 567-599 form a helical membrane-spanning segment; it reads AFFVNYVIASAFIGNAMDLLRIPGLLMYMIRLC. The tract at residues 567-599 is gating helix; sequence AFFVNYVIASAFIGNAMDLLRIPGLLMYMIRLC. The Cytoplasmic segment spans residues 600–619; that stretch reads LARSAAERRNVKRHQAYEFQ. The helical transmembrane segment at 620–638 threads the bilayer; it reads FGAAYAWMMCVFTVVMTYS. Residues 639–641 lie on the Extracellular side of the membrane; that stretch reads ITC. Residues 642–666 form a helical membrane-spanning segment; sequence PIIVPFGLMYMLLKHLVDRYNLYYA. At 667-673 the chain is on the cytoplasmic side; the sequence is YLPAKLD. A helical transmembrane segment spans residues 674–702; that stretch reads KKIHSGAVNQVVAAPILCLFWLLFFSTMR. Residues 703 to 707 lie on the Extracellular side of the membrane; that stretch reads TGFLA. The helical transmembrane segment at 708 to 728 threads the bilayer; the sequence is PTSMFTFVVLVITIVICLCHV. 2 S-palmitoyl cysteine lipidation sites follow: cysteine 726 and cysteine 729. Residues 729–832 lie on the Cytoplasmic side of the membrane; the sequence is CFGHFKYLSA…DSLIENEIHQ (104 aa). Residues 780 to 814 are disordered; that stretch reads EVDGDGDGAPGSSGDEPPSSSSQDEELLMPPDALT. A compositionally biased stretch (low complexity) spans 789–801; the sequence is PGSSGDEPPSSSS.

This sequence belongs to the CSC1 (TC 1.A.17) family. As to quaternary structure, monomer. Interacts with SLC19A2; interaction is required for the phospholipid scramblase activity. Palmitoylation is required for localization to the plasma membrane and stability. Post-translationally, N-Glycosylated.

The protein localises to the cell membrane. It is found in the endoplasmic reticulum membrane. Its subcellular location is the lysosome membrane. It localises to the early endosome membrane. The catalysed reaction is Ca(2+)(in) = Ca(2+)(out). It carries out the reaction Mg(2+)(in) = Mg(2+)(out). It catalyses the reaction K(+)(in) = K(+)(out). The enzyme catalyses Na(+)(in) = Na(+)(out). The catalysed reaction is Cs(+)(in) = Cs(+)(out). It carries out the reaction a 1,2-diacyl-sn-glycero-3-phosphocholine(in) = a 1,2-diacyl-sn-glycero-3-phosphocholine(out). It catalyses the reaction a sphingomyelin(in) = a sphingomyelin(out). Mechanosensitive cation channel with low conductance and high activation threshold. Osmosensitive cation channel preferentially activated by hypotonic stress. Also acts as a phospholipid scramblase in response to changes in membrane structure: upon changes in membrane curvature and thickness, alters its conformation and translocates phospholipids, such as phosphatidylcholine and sphingomyelin, thereby controlling plasma membrane lipid distribution. Forms a heterodimer with SLC19A2, which mediates phospholipid scramblase activity following Ca(2+) stimulation. Expressed in excitatory neurons of the subfornical organ and functions as a thirst receptor that mediates neuronal response to hyperosmolality to drive thirst and drinking behavior. Facilitates intestinal motility by promoting proliferation of intestinal stem cells. Essential for the baby's first breath and respiration throughout life. Upon lung inflation conducts cation currents in alveolar type 1 and 2 cells triggering lamellar body exocytosis and surfactant secretion into airspace. Acts as an osmosensor in cochlear outer hair cells (OHCs) where it mediates calcium influx and regulatory volume decrease response. Required for the maintenance of OHC morphology, OHC survival and normal hearing. This is Mechanosensitive cation channel TMEM63B from Homo sapiens (Human).